A 447-amino-acid chain; its full sequence is MKPSVATLLATVSLVYAQTATEKEPSLSAIESAAASIQPYSPVSNVEGVAFNRFFQVWLENIDYEDAAADENMKWLASQGILLTNFYAVTHPSEPNYCAAVGGDTFGMDNDNFNQIPANVSTVADLLDTKNIAWGEYQEHLPYPGFQGFNYSNQETYVNDYVRKHNPLVLYDSVTKNSTRLRQIKNFTSFEDDLANKKLPQWAFITPNMTNDAHDTNITFGAKWERSWIAPLLNNSYFMNDTLILLTFDEDGTYSKSNKIFSVLLGGAIPDELKGTQDDTFYTHYSVIASVSANWGLPSLGRWDCGANILEIVANKTGYVNYDVDTTNLRLNETYPGPMSAGEYSKYSPVWPNALTRGDCSAGHGILDIVKETYANTEPTYNYSSPFPYDTASNYNTKVTATKKNVTGTHRSSSSSSPSASSNAAVSAVAPAAGVSGLLLGLALNLL.

The N-terminal stretch at 1–17 is a signal peptide; that stretch reads MKPSVATLLATVSLVYA. Residues Asn119, Asn150, Asn177, Asn186, and Asn208 are each glycosylated (N-linked (GlcNAc...) asparagine). The active-site Proton donor is Asp215. N-linked (GlcNAc...) asparagine glycosylation is found at Asn217, Asn234, Asn240, Asn315, Asn332, Asn382, and Asn405. A lipid anchor (GPI-like-anchor amidated serine) is attached at Ser419. The propeptide at 420 to 447 is removed in mature form; it reads ASSNAAVSAVAPAAGVSGLLLGLALNLL.

The GPI-like anchor contains a phosphoceramide lipid group. The anchor position has not been determined.

It is found in the cell membrane. The catalysed reaction is a phosphate monoester + H2O = an alcohol + phosphate. Its activity is regulated as follows. Inhibited by NaF, molybdate and vanadate. Has both phosphomonoesterase and phosphodiesterase activity. Cleaves a broad range of phosphate esters. In Aspergillus fumigatus (strain ATCC MYA-4609 / CBS 101355 / FGSC A1100 / Af293) (Neosartorya fumigata), this protein is Acid phosphatase (phoA).